Reading from the N-terminus, the 209-residue chain is Aspartate kinase-like protein lolA1 (209 aa).

A compositionally biased stretch (basic and acidic residues) spans 1 to 11; that stretch reads MLDESPMRKGD. The disordered stretch occupies residues 1-27; sequence MLDESPMRKGDSVSNDQSNPESNASVS. Positions 12-27 are enriched in polar residues; that stretch reads SVSNDQSNPESNASVS.

The protein belongs to the aspartokinase family.

It participates in alkaloid biosynthesis. Functionally, aspartokinase-like protein; part of the gene cluster that mediates the biosynthesis of loline alkaloids, potent insecticidal agents composed of a pyrrolizidine ring system and an uncommon ether bridge linking carbons 2 and 7. Lolines are structurally differentiated by the various modifications of the L-amino group and include norloline, loline, N-methylloline, N-acetylloline, N-acetylnorloline, and N-formylloline. The first committed step is the condensation of O-acetyl-L-homoserine (derived from L-aspartic acid) and L-proline, probably catalyzed by the gamma-type pyridoxal 5'-phosphate(PLP)-dependent enzyme lolC, to give the diamino diacid, NACPP. Ensuing cyclization, decarboxylation, and acetylation steps yield 1-exo-acetamidopyrrolizidine (AcAP). LolO is required for installation of the ether bridge upon the pathway intermediate, 1-exo-acetamidopyrrolizidine (AcAP). In sequential 2-oxoglutarate- and O(2)-consuming steps, lolO removes hydrogens from C2 and C7 of AcAP to form both carbon-oxygen bonds in N-acetylnorloline (NANL), the precursor to all other lolines. The enzymes lolD, lolE, lolF and lolT have also been proposed to be involved in the ether-bridge installation. Further processing of the exocyclic moiety of NANL by fungal N-acetamidase (LolN), methyltransferase (LolM), and cytochrome P450 (LolP) enzymes, with occasional involvement of a plant acetyltransferase, generates the other known lolines. LolN transforms NANL to norlonine which is monomethylated and dimethylated to respectively lonine and N-methyllonine (NML) by lolM. LolP catalyzes hydroxylation of the methyl group in N-methylloline (NML) and further oxygenation to N-formylloline (NFL). A plant acetyltransferase is responsible for the acetylation of loline to form N-acetylloline (NAL). LolA might interact with aspartate kinase to prevent feedback inhibition of its activity by these end products and thereby promote production of L-homoserine from L-aspartate. In Epichloe uncinata (Endophyte fungus), this protein is Aspartate kinase-like protein lolA1.